Here is a 55-residue protein sequence, read N- to C-terminus: uncharacterized protein (55 aa).

Residues 17–44 (QNVNIALTKKRLDTAQQNADQTLKMIQH) are a coiled coil.

This is an uncharacterized protein from Bacillus subtilis (strain 168).